Here is a 604-residue protein sequence, read N- to C-terminus: Elongation factor 4 (604 aa).

The tr-type G domain maps to 8-190 (KNKRNFSIIA…AIVHRIPAPN (183 aa)). GTP is bound by residues 20-25 (DHGKST) and 137-140 (NKID).

This sequence belongs to the TRAFAC class translation factor GTPase superfamily. Classic translation factor GTPase family. LepA subfamily.

The protein localises to the cell inner membrane. The catalysed reaction is GTP + H2O = GDP + phosphate + H(+). Functionally, required for accurate and efficient protein synthesis under certain stress conditions. May act as a fidelity factor of the translation reaction, by catalyzing a one-codon backward translocation of tRNAs on improperly translocated ribosomes. Back-translocation proceeds from a post-translocation (POST) complex to a pre-translocation (PRE) complex, thus giving elongation factor G a second chance to translocate the tRNAs correctly. Binds to ribosomes in a GTP-dependent manner. This Fusobacterium nucleatum subsp. nucleatum (strain ATCC 25586 / DSM 15643 / BCRC 10681 / CIP 101130 / JCM 8532 / KCTC 2640 / LMG 13131 / VPI 4355) protein is Elongation factor 4.